The chain runs to 432 residues: Glutamate-1-semialdehyde 2,1-aminomutase (432 aa).

Lysine 269 is subject to N6-(pyridoxal phosphate)lysine.

Belongs to the class-III pyridoxal-phosphate-dependent aminotransferase family. HemL subfamily. Homodimer. Requires pyridoxal 5'-phosphate as cofactor.

It localises to the cytoplasm. It catalyses the reaction (S)-4-amino-5-oxopentanoate = 5-aminolevulinate. It participates in porphyrin-containing compound metabolism; protoporphyrin-IX biosynthesis; 5-aminolevulinate from L-glutamyl-tRNA(Glu): step 2/2. It functions in the pathway porphyrin-containing compound metabolism; chlorophyll biosynthesis. This Chloroherpeton thalassium (strain ATCC 35110 / GB-78) protein is Glutamate-1-semialdehyde 2,1-aminomutase.